A 192-amino-acid polypeptide reads, in one-letter code: LOB domain-containing protein 32 (192 aa).

In terms of domain architecture, LOB spans 4-105; the sequence is NRCAVCKILN…QDIESAVNEL (102 aa).

Belongs to the LOB domain-containing protein family.

The protein is LOB domain-containing protein 32 (LBD32) of Arabidopsis thaliana (Mouse-ear cress).